The following is a 237-amino-acid chain: Exosome complex component Rrp4 (237 aa).

The 73-residue stretch at 72–144 folds into the S1 motif domain; it reads GHIVVGKVVD…LSKDPVLTIK (73 aa). The KH domain occupies 152–211; sequence PRGTLVEIPPQKVPRVIGRRGSMVSMIEDLLGVKLIVGQNGRIVVVGDDPQRVEIAVLAV.

It belongs to the RRP4 family. As to quaternary structure, component of the archaeal exosome complex. Forms a trimer of Rrp4 and/or Csl4 subunits. The trimer associates with a hexameric ring-like arrangement composed of 3 Rrp41-Rrp42 heterodimers.

It is found in the cytoplasm. Non-catalytic component of the exosome, which is a complex involved in RNA degradation. Increases the RNA binding and the efficiency of RNA degradation. Confers strong poly(A) specificity to the exosome. This is Exosome complex component Rrp4 from Thermofilum pendens (strain DSM 2475 / Hrk 5).